The following is a 388-amino-acid chain: Na(+)/H(+) antiporter NhaA (388 aa).

A run of 11 helical transmembrane segments spans residues 14 to 34 (GGII…SGFT), 59 to 79 (MLLW…GLEV), 95 to 115 (AFPV…YLAF), 125 to 145 (GWAI…ALLG), 154 to 174 (IFLM…IALF), 179 to 199 (LSMV…VLNL), 219 to 239 (VLKS…FIPL), 254 to 274 (VLHP…NAGV), 287 to 307 (ILPL…ISLF), 328 to 348 (IMAV…IASL), and 356 to 376 (ALIN…AVIG).

The protein belongs to the NhaA Na(+)/H(+) (TC 2.A.33) antiporter family.

Its subcellular location is the cell inner membrane. The catalysed reaction is Na(+)(in) + 2 H(+)(out) = Na(+)(out) + 2 H(+)(in). Functionally, na(+)/H(+) antiporter that extrudes sodium in exchange for external protons. The chain is Na(+)/H(+) antiporter NhaA from Citrobacter koseri (strain ATCC BAA-895 / CDC 4225-83 / SGSC4696).